A 311-amino-acid polypeptide reads, in one-letter code: MQYQIERIDHQIADDRSQTGTFLIGPLERGQATTLGNSLRRVLMGGLEGSAVTAVRIAGINHEYATIPGVREDVLDILLNCKQLSINSSNPELEIGRLVASGPLDVKANDIQFSSQVEIVDGEKPIATIQEGHNLELEIHVERGVGYRPVDRKNQETTAIDLLQIDAVFMPVKRVNFSIDETAVAEGGTGRERLKMEVVTDGSTSPDDAIAEAANQLIELFQPLATVTMVEEIPEEPEPSPEAQIPLEELNLSVRAYNCLKRAQVNSVSDLMGFSYEDLLEIKNFGSKSADEVIEALERIGISIPQSRTSV.

Residues 1 to 228 (MQYQIERIDH…ELFQPLATVT (228 aa)) are alpha N-terminal domain (alpha-NTD). Residues 239–311 (PSPEAQIPLE…ISIPQSRTSV (73 aa)) are alpha C-terminal domain (alpha-CTD).

Belongs to the RNA polymerase alpha chain family. In terms of assembly, in cyanobacteria the RNAP catalytic core is composed of 2 alpha, 1 beta, 1 beta', 1 gamma and 1 omega subunit. When a sigma factor is associated with the core the holoenzyme is formed, which can initiate transcription.

The catalysed reaction is RNA(n) + a ribonucleoside 5'-triphosphate = RNA(n+1) + diphosphate. DNA-dependent RNA polymerase catalyzes the transcription of DNA into RNA using the four ribonucleoside triphosphates as substrates. The chain is DNA-directed RNA polymerase subunit alpha from Prochlorococcus marinus (strain MIT 9312).